The primary structure comprises 449 residues: UNC93-like protein MFSD11 (449 aa).

A helical membrane pass occupies residues 8 to 28; that stretch reads LFNIIILGVAFMFMFTAFQTC. Asn-40 carries an N-linked (GlcNAc...) asparagine glycan. A run of 5 helical transmembrane segments spans residues 53-73, 74-94, 96-116, 138-158, and 170-190; these read AIIY…VAIV, GPQL…AVFI, PFPW…AVLW, IFWA…YFAW, and RTVF…FFLI. Ser-204 bears the Phosphoserine mark. 6 helical membrane passes run 239-259, 277-297, 309-329, 359-379, 385-405, and 410-430; these read MLLL…FSGV, LIGL…SLFG, PVVL…FLNM, FLLG…LGFL, APAF…AFFY, and LLHW…ISFF.

This sequence belongs to the unc-93 family.

It is found in the membrane. This Macaca fascicularis (Crab-eating macaque) protein is UNC93-like protein MFSD11 (MFSD11).